Here is a 251-residue protein sequence, read N- to C-terminus: Flap endonuclease Xni (251 aa).

D104 lines the Mg(2+) pocket. A 5'-3' exonuclease domain is found at 160–249 (VQPQQLPDYW…IDGNLQQLRL (90 aa)). L171, A172, P180, V182, and I185 together coordinate K(+). The segment at 184–189 (GIGPKS) is interaction with DNA.

It belongs to the Xni family. Mg(2+) serves as cofactor. The cofactor is K(+).

Functionally, has flap endonuclease activity. During DNA replication, flap endonucleases cleave the 5'-overhanging flap structure that is generated by displacement synthesis when DNA polymerase encounters the 5'-end of a downstream Okazaki fragment. The protein is Flap endonuclease Xni of Escherichia coli O17:K52:H18 (strain UMN026 / ExPEC).